Here is a 231-residue protein sequence, read N- to C-terminus: L-ribulose-5-phosphate 4-epimerase SgbE (231 aa).

Substrate contacts are provided by residues Gly27–Asn28, Ser44–Gly45, and Ser74–Ser75. Residues Asp76, His95, and His97 each contribute to the Zn(2+) site. Asp120 functions as the Proton donor/acceptor in the catalytic mechanism. Residue His171 coordinates Zn(2+). The active-site Proton donor/acceptor is the Tyr229.

This sequence belongs to the aldolase class II family. AraD/FucA subfamily. Requires Zn(2+) as cofactor.

It catalyses the reaction L-ribulose 5-phosphate = D-xylulose 5-phosphate. Its function is as follows. Catalyzes the interconversion of L-ribulose 5-phosphate (LRu5P) and D-xylulose 5-phosphate (D-Xu5P) via a retroaldol/aldol mechanism (carbon-carbon bond cleavage analogous to a class II aldolase reaction). May be involved in the utilization of 2,3-diketo-L-gulonate. The protein is L-ribulose-5-phosphate 4-epimerase SgbE of Haemophilus influenzae (strain ATCC 51907 / DSM 11121 / KW20 / Rd).